Reading from the N-terminus, the 392-residue chain is MKFSQASLLAACLPAISARFIETAEADNVILKPDELYLIETAPGKTQWVTEDQKWELRRNGQRFMDITDTPSLGSTRLNAQTVSFPKKCVKQDEVADLSKNLEKKNMKANLEKLTSFHTRYYKSNYGLESSDWVLEKVNQIIKDAGAQDTVYAESFPHTWQQHSVIATIPGQSNSTVVIGAHQDSINLFLPSILAAPGADDDGSGTVTIMEVFRALLNSKDVVDGKAPNTIEFHWYSAEEGGLLGSQAIFQSYEQSGRDIKAMLQQDMTGYVQKTLDAGQPESVGVITDFVDPGLTTFIKTVVEEYCNIPWVETKCGYACSDHASASKAGYPSAFVIESAFEYSDPHIHTTDDNIKYLSFDHMLEHARMTLGLVYELGFYDFSDSSEDRGDL.

An N-terminal signal peptide occupies residues 1–18; that stretch reads MKFSQASLLAACLPAISA. A propeptide spanning residues 19–82 is cleaved from the precursor; that stretch reads RFIETAEADN…LGSTRLNAQT (64 aa). A glycan (N-linked (GlcNAc...) asparagine) is linked at asparagine 174. Histidine 182, aspartate 201, glutamate 240, and aspartate 267 together coordinate Zn(2+). A disulfide bond links cysteine 316 and cysteine 320. Residue histidine 349 coordinates Zn(2+).

It belongs to the peptidase M28 family. M28E subfamily. In terms of assembly, monomer. The cofactor is Zn(2+).

It is found in the secreted. Extracellular aminopeptidase that allows assimilation of proteinaceous substrates. This chain is Leucine aminopeptidase 1 (LAP1), found in Fusarium vanettenii (strain ATCC MYA-4622 / CBS 123669 / FGSC 9596 / NRRL 45880 / 77-13-4) (Fusarium solani subsp. pisi).